Consider the following 105-residue polypeptide: Met repressor (105 aa).

The protein belongs to the MetJ family. In terms of assembly, homodimer.

It localises to the cytoplasm. In terms of biological role, this regulatory protein, when combined with SAM (S-adenosylmethionine) represses the expression of the methionine regulon and of enzymes involved in SAM synthesis. The polypeptide is Met repressor (Photorhabdus laumondii subsp. laumondii (strain DSM 15139 / CIP 105565 / TT01) (Photorhabdus luminescens subsp. laumondii)).